The primary structure comprises 480 residues: MAAGAIPMAYQTTPSSPDWLNKGDNAWQMTSATLVGLQSMPGLVILYGSIVKKKWAINSAFMALYAFAAVWICWVVWAYNMSFGDRLLPFWGKARPALGQSFLVAQSELTATAIRYHNGSAEAPMLKPLYPVATMVYFQCMFASITIIILAGSLLGRMNIKAWMAFVPLWITFSYTVCAFSLWGGGFLFQWGVIDYSGGYVIHLSSGIAGLTAAYWVGPRSASDRERFPPNNILLVLAGAGLLWLGWTGFNGGDPYSANIDSSMAVLNTHICASTSLLVWTILDVFFFGKPSVIGAVQGMITGLVCITPGAGLVQGWAAIVMGILSGSIPWYTMMVLHKKWSFMQRIDDTLGVFHTHAVAGFLGGATTGLFAEPILCSLFLSIPDSKGAFYGGPGGSQFGKQIAGALFVTAWNIVITSIICVIISLILPLRIADQELLIGDDAVHGEEAYAIWAEGELNDMTHHNESTHSGVSVGVTQNV.

Transmembrane regions (helical) follow at residues 31-51 (SATL…GSIV), 59-79 (SAFM…VWAY), 135-155 (MVYF…GSLL), 169-189 (LWIT…GFLF), 198-218 (GGYV…YWVG), 233-253 (ILLV…FNGG), 265-287 (AVLN…DVFF), 292-314 (SVIG…AGLV), 318-337 (AAIV…MMVL), 361-381 (GFLG…SLFL), and 407-427 (LFVT…ISLI).

This sequence belongs to the ammonia transporter channel (TC 1.A.11.2) family.

Its subcellular location is the membrane. Involved in ammonium transport. In Oryza sativa subsp. japonica (Rice), this protein is Ammonium transporter 3 member 3 (AMT3-3).